The following is a 408-amino-acid chain: MLDIYLGVGMFIAIVLALVLIIMFAKSKLVPEGEVTISINGDPDKAITAQPGDKLLGALANSGIFVSSACGGGGSCGQCRVDIKAGGGEILPTELDHISKREAKEGCRLSCQVSIKQDMDIELPEEIFGIKKWDCEVISNDNKATFIKELKLKIPNGESVPFRAGGYIQIEAPPHHVKYKDFDVPEEYRGDWERFGFFDIESKVDDETIRAYSMANYPEEEGIIMLNVRVASPPPNNLSLPAGKMSSYIWSLKEGDKATISGPFGEFFAKKTDAEMVFIGGGAGMAPMRSHIFDQLRRLKTDRKISFWYGARSLREMFYVEDFDMLQKENDNFKWHVALSDPQPEDNWEGMTGFIHQVLLENYLKDHPAPEDCEFYMCGPPMMNAAVISMLKDLGVEDENIMLDDFGG.

Residues 4-24 traverse the membrane as a helical segment; it reads IYLGVGMFIAIVLALVLIIMF. Residues 33 to 127 enclose the 2Fe-2S ferredoxin-type domain; the sequence is GEVTISINGD…DMDIELPEEI (95 aa). Cys70, Cys76, Cys79, and Cys111 together coordinate [2Fe-2S] cluster. The 141-residue stretch at 130-270 folds into the FAD-binding FR-type domain; sequence IKKWDCEVIS…SGPFGEFFAK (141 aa).

This sequence belongs to the NqrF family. As to quaternary structure, composed of six subunits; NqrA, NqrB, NqrC, NqrD, NqrE and NqrF. [2Fe-2S] cluster is required as a cofactor. FAD serves as cofactor.

The protein resides in the cell inner membrane. The catalysed reaction is a ubiquinone + n Na(+)(in) + NADH + H(+) = a ubiquinol + n Na(+)(out) + NAD(+). In terms of biological role, NQR complex catalyzes the reduction of ubiquinone-1 to ubiquinol by two successive reactions, coupled with the transport of Na(+) ions from the cytoplasm to the periplasm. The first step is catalyzed by NqrF, which accepts electrons from NADH and reduces ubiquinone-1 to ubisemiquinone by a one-electron transfer pathway. This is Na(+)-translocating NADH-quinone reductase subunit F from Pseudoalteromonas atlantica (strain T6c / ATCC BAA-1087).